The sequence spans 344 residues: N-acetyl-gamma-glutamyl-phosphate reductase (344 aa).

The active site involves cysteine 150.

It belongs to the NAGSA dehydrogenase family. Type 1 subfamily.

It localises to the cytoplasm. It catalyses the reaction N-acetyl-L-glutamate 5-semialdehyde + phosphate + NADP(+) = N-acetyl-L-glutamyl 5-phosphate + NADPH + H(+). The protein operates within amino-acid biosynthesis; L-arginine biosynthesis; N(2)-acetyl-L-ornithine from L-glutamate: step 3/4. Its function is as follows. Catalyzes the NADPH-dependent reduction of N-acetyl-5-glutamyl phosphate to yield N-acetyl-L-glutamate 5-semialdehyde. This chain is N-acetyl-gamma-glutamyl-phosphate reductase, found in Pseudomonas aeruginosa (strain ATCC 15692 / DSM 22644 / CIP 104116 / JCM 14847 / LMG 12228 / 1C / PRS 101 / PAO1).